The sequence spans 158 residues: Acetolactate synthase small subunit (158 aa).

The 76-residue stretch at 4–79 (MIIAKLHNVT…DVIEVADITD (76 aa)) folds into the ACT domain.

It belongs to the acetolactate synthase small subunit family. In terms of assembly, dimer of large and small chains.

The catalysed reaction is 2 pyruvate + H(+) = (2S)-2-acetolactate + CO2. Its pathway is amino-acid biosynthesis; L-isoleucine biosynthesis; L-isoleucine from 2-oxobutanoate: step 1/4. It functions in the pathway amino-acid biosynthesis; L-valine biosynthesis; L-valine from pyruvate: step 1/4. The protein is Acetolactate synthase small subunit (ilvH) of Lactococcus lactis subsp. lactis (strain IL1403) (Streptococcus lactis).